Consider the following 501-residue polypeptide: Myosin heavy chain, embryonic smooth muscle isoform (501 aa).

Residues 1–457 (REAREKETKA…TLKNRLRRGG (457 aa)) are a coiled coil. The segment at 1-501 (REAREKETKA…VNETQPPQSE (501 aa)) is rodlike tail (S2 and LMM domains). 3 disordered regions span residues 182-202 (YQRELEEARGSRDEIFAQSKE), 221-254 (LASSERARRHAEQERDELADEIANSASGKSALLD), and 397-501 (MEKA…PQSE). A compositionally biased stretch (basic and acidic residues) spans 223–233 (SSERARRHAEQ). Positions 492–501 (VNETQPPQSE) are enriched in polar residues.

Muscle myosin is a hexameric protein that consists of 2 heavy chain subunits (MHC), 2 alkali light chain subunits (MLC) and 2 regulatory light chain subunits (MLC-2).

The protein localises to the cytoplasm. Its subcellular location is the myofibril. Muscle contraction. The chain is Myosin heavy chain, embryonic smooth muscle isoform from Oryctolagus cuniculus (Rabbit).